We begin with the raw amino-acid sequence, 308 residues long: Putative cathepsin L 3 (308 aa).

Residues 1–21 (MKQFLTAAIVTLLMTAGYYHL) form the signal peptide. Positions 22 to 110 (QEDDTNDFER…GASLPEVQLE (89 aa)) are cleaved as a propeptide — activation peptide. 2 cysteine pairs are disulfide-bonded: C129–C170 and C254–C298. Catalysis depends on residues H261 and N278.

This sequence belongs to the peptidase C1 family.

It is found in the secreted. It catalyses the reaction Specificity close to that of papain. As compared to cathepsin B, cathepsin L exhibits higher activity toward protein substrates, but has little activity on Z-Arg-Arg-NHMec, and no peptidyl-dipeptidase activity.. In terms of biological role, may be involved in extracellular digestion. In Paramecium tetraurelia, this protein is Putative cathepsin L 3.